The chain runs to 470 residues: MSSDAASPVVTRIAPSPTGTMHIGTARTGLFNWLFARKHGGKFVLRIEDTDRERSTPEATQAILDGMAWLGLDYDGEAVSQFARADRHREVAEQMLAEGHAYKCFSTQDEIAAFRDAAKADGRSTLFLSPWREASDHPDAPYVIRLKAPRDGTTVIRDRVQSDVTIQNATLDDMILLRSDGTPTYMHAVVVDDHDMGVTHVVRGDDHLNNAARQIQIYAAMGWAEPVWSHIPLIHGDDGKKLSKRHGATGVMEYAEMGIPAAAMRNYLTRLGWSHGDEELFTDEQARDWFDLDGIGKSPSRLDMKKLANVTGWHIARTDDADLVAQIEGYLALTGAPALSQAQHDGLTRAMYCLKDRAKSLPDLLDKGRFVLENRPFDYDEKSVTMLDPVSRSILRELTAQLQNARWTRDTLEGVLNAAADSHGLKFGKLAGPLRAALSGRSVSPSVFDMMLVIGRDETLARLDEAASLT.

The short motif at 15–25 (PSPTGTMHIGT) is the 'HIGH' region element. A 'KMSKS' region motif is present at residues 241–245 (KLSKR). Residue lysine 244 participates in ATP binding.

This sequence belongs to the class-I aminoacyl-tRNA synthetase family. Glutamate--tRNA ligase type 1 subfamily. In terms of assembly, monomer.

The protein resides in the cytoplasm. The catalysed reaction is tRNA(Glu) + L-glutamate + ATP = L-glutamyl-tRNA(Glu) + AMP + diphosphate. In terms of biological role, catalyzes the attachment of glutamate to tRNA(Glu) in a two-step reaction: glutamate is first activated by ATP to form Glu-AMP and then transferred to the acceptor end of tRNA(Glu). This chain is Glutamate--tRNA ligase 1, found in Jannaschia sp. (strain CCS1).